We begin with the raw amino-acid sequence, 269 residues long: Tryptophan synthase alpha chain (269 aa).

Catalysis depends on proton acceptor residues glutamate 45 and aspartate 56.

Belongs to the TrpA family. Tetramer of two alpha and two beta chains.

The enzyme catalyses (1S,2R)-1-C-(indol-3-yl)glycerol 3-phosphate + L-serine = D-glyceraldehyde 3-phosphate + L-tryptophan + H2O. It participates in amino-acid biosynthesis; L-tryptophan biosynthesis; L-tryptophan from chorismate: step 5/5. The alpha subunit is responsible for the aldol cleavage of indoleglycerol phosphate to indole and glyceraldehyde 3-phosphate. In Shouchella clausii (strain KSM-K16) (Alkalihalobacillus clausii), this protein is Tryptophan synthase alpha chain.